Consider the following 350-residue polypeptide: Protein Wnt-8b (350 aa).

Positions 1 to 21 (MFLMKPVCVLLVTCVLHRSHA) are cleaved as a signal peptide. A disulfide bridge connects residues C53 and C64. N102 carries N-linked (GlcNAc...) asparagine glycosylation. Intrachain disulfides connect C103/C111, C113/C131, C179/C193, C181/C188, C255/C293, C271/C286, C290/C332, C308/C323, C310/C320, and C315/C316. S185 carries O-palmitoleoyl serine lipidation. Residue N258 is glycosylated (N-linked (GlcNAc...) asparagine).

Belongs to the Wnt family. In terms of processing, palmitoleoylation is required for efficient binding to frizzled receptors. Depalmitoleoylation leads to Wnt signaling pathway inhibition. Proteolytic processing by TIKI1 and TIKI2 promotes oxidation and formation of large disulfide-bond oligomers, leading to inactivation of WNT8B.

It is found in the secreted. It localises to the extracellular space. The protein resides in the extracellular matrix. Functionally, ligand for members of the frizzled family of seven transmembrane receptors. May play an important role in the development and differentiation of certain forebrain structures, notably the hippocampus. The sequence is that of Protein Wnt-8b (Wnt8b) from Mus musculus (Mouse).